Reading from the N-terminus, the 214-residue chain is Variable small protein 24 (214 aa).

Residues 1 to 18 form the signal peptide; it reads MRKRISAIIMTLFMVFMS. The N-palmitoyl cysteine moiety is linked to residue Cys19. Residue Cys19 is the site of S-diacylglycerol cysteine attachment. Residues 146–172 are disordered; that stretch reads TELGKKDASDDDTKKAIKKDNSDKTKG.

The protein belongs to the variable small protein (Vsp) family.

It localises to the cell outer membrane. Its function is as follows. The Vlp and Vsp proteins are antigenically distinct proteins, only one vlp or vsp gene is transcriptionally active at any one time. Switching between these genes is a mechanism of host immune response evasion. This is Variable small protein 24 from Borrelia hermsii.